Consider the following 425-residue polypeptide: Spermatogenesis- and oogenesis-specific basic helix-loop-helix-containing protein 2 (425 aa).

Residues 201-252 (KISLLHSSKEKLRRERIKYCCEQLRTLLPYVKGRKNDAASVLEATVDYVKYI) form the bHLH domain.

As to quaternary structure, forms both hetero- and homodimers with SOHLH1.

The protein localises to the nucleus. It localises to the cytoplasm. In terms of biological role, transcription regulator of both male and female germline differentiation. Suppresses genes involved in spermatogonial stem cells maintenance, and induces genes important for spermatogonial differentiation. Coordinates oocyte differentiation without affecting meiosis I. This chain is Spermatogenesis- and oogenesis-specific basic helix-loop-helix-containing protein 2 (SOHLH2), found in Homo sapiens (Human).